The sequence spans 453 residues: Dihydrolipoyllysine-residue succinyltransferase component of 2-oxoglutarate dehydrogenase complex, mitochondrial (453 aa).

The N-terminal 67 residues, 1–67 (MLSRSRCVSR…RFFRTTAVCK (67 aa)), are a transit peptide targeting the mitochondrion. Residues 70-144 (LVTVKTPAFA…EGGTPLFTLR (75 aa)) form the Lipoyl-binding domain. Position 81 is a phosphoserine (Ser-81). At Lys-110 the chain carries N6-lipoyllysine. Residues 152 to 172 (KAKPAEAPAAAAPKAEPTAAA) are compositionally biased toward low complexity. The disordered stretch occupies residues 152-225 (KAKPAEAPAA…GKGLRSEHRE (74 aa)). Residue Lys-154 is modified to N6-acetyllysine. Pro residues predominate over residues 173–196 (VPPPAAPIPTQMPPVPSPSQPPSG). An N6-acetyllysine mark is found at Lys-267, Lys-272, Lys-273, Lys-277, and Lys-307. Residues His-424 and Asp-428 contribute to the active site.

It belongs to the 2-oxoacid dehydrogenase family. The 2-oxoglutarate dehydrogenase complex is composed of OGDH (2-oxoglutarate dehydrogenase; E1), DLST (dihydrolipoamide succinyltransferase; E2), DLD (dihydrolipoamide dehydrogenase; E3) and the assembly factor KGD4. It contains multiple copies of the three enzymatic components (E1, E2 and E3). In the nucleus, the 2-oxoglutarate dehydrogenase complex associates with KAT2A. Interacts with ABHD11; this interaction maintains the functional lipoylation of the 2-oxoglutarate dehydrogenase complex. (R)-lipoate serves as cofactor.

The protein resides in the mitochondrion matrix. The protein localises to the nucleus. The catalysed reaction is N(6)-[(R)-dihydrolipoyl]-L-lysyl-[protein] + succinyl-CoA = N(6)-[(R)-S(8)-succinyldihydrolipoyl]-L-lysyl-[protein] + CoA. Its pathway is amino-acid degradation; L-lysine degradation via saccharopine pathway; glutaryl-CoA from L-lysine: step 6/6. The protein operates within carbohydrate metabolism; tricarboxylic acid cycle. Dihydrolipoamide succinyltransferase (E2) component of the 2-oxoglutarate dehydrogenase complex. The 2-oxoglutarate dehydrogenase complex catalyzes the overall conversion of 2-oxoglutarate to succinyl-CoA and CO(2). The 2-oxoglutarate dehydrogenase complex is mainly active in the mitochondrion. A fraction of the 2-oxoglutarate dehydrogenase complex also localizes in the nucleus and is required for lysine succinylation of histones: associates with KAT2A on chromatin and provides succinyl-CoA to histone succinyltransferase KAT2A. This Homo sapiens (Human) protein is Dihydrolipoyllysine-residue succinyltransferase component of 2-oxoglutarate dehydrogenase complex, mitochondrial.